The following is a 451-amino-acid chain: tRNA-2-methylthio-N(6)-dimethylallyladenosine synthase (451 aa).

One can recognise an MTTase N-terminal domain in the interval 11 to 127 (RHYHITTFGC…LEDLLQQVFD (117 aa)). [4Fe-4S] cluster is bound by residues C20, C56, C90, C162, C166, and C169. Positions 148–385 (RDSTITAWVN…NHLVAQKAAE (238 aa)) constitute a Radical SAM core domain. Residues 388-451 (QRYLGRIEEV…RAFSLTGEIV (64 aa)) form the TRAM domain.

It belongs to the methylthiotransferase family. MiaB subfamily. Monomer. Requires [4Fe-4S] cluster as cofactor.

The protein resides in the cytoplasm. The catalysed reaction is N(6)-dimethylallyladenosine(37) in tRNA + (sulfur carrier)-SH + AH2 + 2 S-adenosyl-L-methionine = 2-methylsulfanyl-N(6)-dimethylallyladenosine(37) in tRNA + (sulfur carrier)-H + 5'-deoxyadenosine + L-methionine + A + S-adenosyl-L-homocysteine + 2 H(+). Its function is as follows. Catalyzes the methylthiolation of N6-(dimethylallyl)adenosine (i(6)A), leading to the formation of 2-methylthio-N6-(dimethylallyl)adenosine (ms(2)i(6)A) at position 37 in tRNAs that read codons beginning with uridine. In Rippkaea orientalis (strain PCC 8801 / RF-1) (Cyanothece sp. (strain PCC 8801)), this protein is tRNA-2-methylthio-N(6)-dimethylallyladenosine synthase.